The primary structure comprises 409 residues: Torsin-4A (409 aa).

Positions 1–16 are enriched in basic and acidic residues; the sequence is MGEQDPSDRLRGDQLK. Disordered regions lie at residues 1–28 and 75–99; these read MGEQDPSDRLRGDQLKEPNQNGKGSFSQ and DNLHEPVNSNPASPRKRKKKRKGRV. A compositionally biased stretch (polar residues) spans 17–28; sequence EPNQNGKGSFSQ. Over residues 88–98 the composition is skewed to basic residues; sequence PRKRKKKRKGR. Residues 120-136 form a helical membrane-spanning segment; it reads CLYLLCIIVFLQVYNAI. 192 to 199 contributes to the ATP binding site; that stretch reads GPTGVGKS.

It belongs to the ClpA/ClpB family. Torsin subfamily.

The protein resides in the membrane. The protein is Torsin-4A (tor4a) of Danio rerio (Zebrafish).